A 411-amino-acid polypeptide reads, in one-letter code: MFHPRARTMLLLSLPALIIGVASSLVLIAAMKVASVFQQFLWQRLPTNIGIAYDSPFWIVGMLTLTGVVVGLIIRYSPGHAGPDPAIEPLISMPVSPSALPGLLLALIIGLAGGVSLGPEHPIMTINIALAAAFGSRLFPRITALDWTILASAGTIGALFGTPVAAALIFSQTLSGSNDIPMWDRLFAPLMAAAAGSLTTSLFFHPHFSLPIAHYTQMRLVDIASGAIVAAIAIAAGMVAVWCLPRLHELLHRLKNPVLILGIGGFILGILGVIGGPLTLFKGLDEMQQMAFSQTLGAGDYFTLAVVKLAALVIAAASGFRGGRIFPAVFIGAALGLMLHAHVEAVPAAITVSCAILGLVLVVTRDGWLSLFMAAVVVPDTNLLPLLCIVMLPAWLLLAGKPLLAANRHEP.

The next 11 membrane-spanning stretches (helical) occupy residues 9 to 29, 54 to 74, 99 to 119, 149 to 169, 186 to 206, 223 to 243, 258 to 278, 296 to 316, 322 to 342, 343 to 363, and 386 to 406; these read MLLLSLPALIIGVASSLVLIA, DSPFWIVGMLTLTGVVVGLII, ALPGLLLALIIGLAGGVSLGP, ILASAGTIGALFGTPVAAALI, LFAPLMAAAAGSLTTSLFFHP, IASGAIVAAIAIAAGMVAVWC, VLILGIGGFILGILGVIGGPL, LGAGDYFTLAVVKLAALVIAA, GGRIFPAVFIGAALGLMLHAH, VEAVPAAITVSCAILGLVLVV, and LLCIVMLPAWLLLAGKPLLAA.

This sequence belongs to the chloride channel (TC 2.A.49) family.

The protein localises to the cell membrane. The sequence is that of Putative ion-transport protein YfeO from Salmonella choleraesuis (strain SC-B67).